The primary structure comprises 246 residues: Auxin-responsive protein IAA25 (246 aa).

The segment at 1-22 is disordered; the sequence is MKSSSVAPRLKQERQDDCKFQE. Residues 10–22 are compositionally biased toward basic and acidic residues; the sequence is LKQERQDDCKFQE. Positions 28–32 match the EAR-like (transcriptional repression) motif; it reads LELRL. One can recognise a PB1 domain in the interval 143–238; that stretch reads TMFVKVNLEG…SVKRLYIAQD (96 aa).

This sequence belongs to the Aux/IAA family. As to quaternary structure, homodimers and heterodimers. As to expression, highly expressed in flowers. Expressed in roots and seedlings.

The protein resides in the nucleus. Aux/IAA proteins are short-lived transcriptional factors that function as repressors of early auxin response genes at low auxin concentrations. The sequence is that of Auxin-responsive protein IAA25 (IAA25) from Oryza sativa subsp. japonica (Rice).